A 104-amino-acid chain; its full sequence is Nucleoid-associated protein Moth_0028 (104 aa).

It belongs to the YbaB/EbfC family. Homodimer.

The protein resides in the cytoplasm. It is found in the nucleoid. Binds to DNA and alters its conformation. May be involved in regulation of gene expression, nucleoid organization and DNA protection. The polypeptide is Nucleoid-associated protein Moth_0028 (Moorella thermoacetica (strain ATCC 39073 / JCM 9320)).